Here is a 190-residue protein sequence, read N- to C-terminus: Putative acetyltransferase DDB_G0275913 (190 aa).

This sequence belongs to the transferase hexapeptide repeat family.

The protein is Putative acetyltransferase DDB_G0275913 of Dictyostelium discoideum (Social amoeba).